The chain runs to 155 residues: UPF0178 protein Clos_2709 (155 aa).

The protein belongs to the UPF0178 family.

The sequence is that of UPF0178 protein Clos_2709 from Alkaliphilus oremlandii (strain OhILAs) (Clostridium oremlandii (strain OhILAs)).